Reading from the N-terminus, the 218-residue chain is PKHD-type hydroxylase IL0759 (218 aa).

Residues 76–170 (QVARVTINRY…RLAMIGWVQS (95 aa)) form the Fe2OG dioxygenase domain. His-94, Asp-96, and His-151 together coordinate Fe cation. Residue Arg-161 coordinates 2-oxoglutarate.

It depends on Fe(2+) as a cofactor. L-ascorbate serves as cofactor.

In Idiomarina loihiensis (strain ATCC BAA-735 / DSM 15497 / L2-TR), this protein is PKHD-type hydroxylase IL0759.